A 482-amino-acid chain; its full sequence is Cytochrome P450 monooxygenase pynD (482 aa).

The signal sequence occupies residues 1–22 (MWRIPVIVALVAGLLYWVRKQG). The N-linked (GlcNAc...) asparagine glycan is linked to asparagine 401. Position 417 (cysteine 417) interacts with heme.

The protein belongs to the cytochrome P450 family. Heme is required as a cofactor.

The protein operates within secondary metabolite biosynthesis. Cytochrome P450 monooxygenase; part of the gene cluster that mediates the biosynthesis of pyranonigrins, a family of antioxidative compounds. The first step of pyranonigrins biosynthesis is performed by the hybrid PKS-NRPS synthetase that condenses 6 malonyl-CoA units to an acetyl starter unit, to form a 1,3,5-trioxotetradecane-6,8-dienyl-ACP. The enoyl reductase (ER) domain of pynA is likely to be functional during the first two rounds of polyketide chain extension, to generate the saturated C-C bonds of the alkyl side chain. PynA subsequently forms the amide bond between the acyl chain and L-serine. Although pynA has a terminal reductase domain, it appears to require the thioesterase pynI for the release of the straight-chain intermediate from pynA via the formation of a tetramic acid pyranonigrin J. The methyltransferase pynC then coverts pyranonigrin J to pyranonigrin I via N-methylation. The FAD-dependent monooxygenase pynG catalyzes an epoxidation-mediated cyclization to form the dihydro-gamma-pyrone moiety, followed by pynD-catalyzed oxidation of the alcohol to the ketone and enolization to yield the characteristic tetramic acid-fused gamma-pyrone core of pyranonigrin H. Pyranonigrin H is substrate of pynH for dehydration-mediated exo-methylene formation from the serine side chain to produce pyranonigrin E, before the oxidase pynE reduces the exo-methylene of pyranonigrin E into a pendant methyl to form pyranonigrin G. The FAD-linked oxidoreductase pynB performs the reverse reaction and converts pyranonigrin G back to pyranonigrin E. This chain is Cytochrome P450 monooxygenase pynD, found in Aspergillus niger (strain ATCC MYA-4892 / CBS 513.88 / FGSC A1513).